A 106-amino-acid polypeptide reads, in one-letter code: MSVVIRLARAGTKKRPFYHVVVADSRFPRDGRFIERLGYFNPLMAKDNEARLKLDLDKVKDWLAKGAQPSDRVARFLDTAGVRKREARNNPEKAVPRKERKAADGK.

The segment at 84 to 106 is disordered; that stretch reads KREARNNPEKAVPRKERKAADGK.

In Rhodopseudomonas palustris (strain ATCC BAA-98 / CGA009), this protein is Small ribosomal subunit protein bS16.